Here is a 519-residue protein sequence, read N- to C-terminus: Ribonuclease Y (519 aa).

Residues 3–23 (LIEIVLLLVGMAVGAATGFIL) form a helical membrane-spanning segment. The KH domain occupies 209–272 (TVTAVSLPSE…QIAKMALERL (64 aa)). An HD domain is found at 335–428 (VLQHSMEVAS…VQAADSLSGA (94 aa)).

This sequence belongs to the RNase Y family.

It is found in the cell membrane. In terms of biological role, endoribonuclease that initiates mRNA decay. The chain is Ribonuclease Y from Oleidesulfovibrio alaskensis (strain ATCC BAA-1058 / DSM 17464 / G20) (Desulfovibrio alaskensis).